Here is a 377-residue protein sequence, read N- to C-terminus: Transcription factor EC (377 aa).

Positions Gln-169–Leu-222 constitute a bHLH domain. Residues Asp-349–Leu-377 form a disordered region. Low complexity predominate over residues Ser-353–Ser-370.

It belongs to the MiT/TFE family.

The protein resides in the nucleus. Transcriptional regulator that acts as a repressor or an activator. Binds DNA. This chain is Transcription factor EC (TFEC), found in Gallus gallus (Chicken).